The sequence spans 313 residues: MAETFKHTTVLLDEAVNGLSIRSNGIYIDGTFGRGGHSRLILSHLGPEGRLLAIDRDPQAVEVANTIDDARFSIIHGPFSELAEYVEARGLTGKIDGILLDLGVSSPQLDDPERGFSFMRDGPLDMRMDPTRGQSAADWLMKAEADDIAWVLKTFGEERFAKRIARAIVERNRIDPLTRTKALAELIAAASPIREKYKHPATRSFQAIRIYINSELEEIERALDGALTVLAPGGRLSVISFHSLEDRIVKRFIRQHSRGPQVPAGLPLTEAQLRSQGGPTLKSVGKMMPPDDEVADNPRARSSVLRFAERLPS.

Residues 35–37, D55, F79, D101, and Q108 contribute to the S-adenosyl-L-methionine site; that span reads GGH. The interval 276-300 is disordered; the sequence is QGGPTLKSVGKMMPPDDEVADNPRA.

Belongs to the methyltransferase superfamily. RsmH family.

It localises to the cytoplasm. It carries out the reaction cytidine(1402) in 16S rRNA + S-adenosyl-L-methionine = N(4)-methylcytidine(1402) in 16S rRNA + S-adenosyl-L-homocysteine + H(+). Specifically methylates the N4 position of cytidine in position 1402 (C1402) of 16S rRNA. This is Ribosomal RNA small subunit methyltransferase H from Dickeya chrysanthemi (strain Ech1591) (Dickeya zeae (strain Ech1591)).